The following is a 197-amino-acid chain: MLRPPPPSSVLTASAAAARPPASVVQPQRQAAHRRRAETLRLRRVFEMFDRDGDGVITPAELSGALCRLGARGEAPPAAAALDAVVAAYIAPGMAGLRFAEFEALHAELAGLGGRQAVAAAEAEEEKEADMREAFGVFDEDGDGYISAAELQAVLSRMGLPEAACMARVRDMIAAADRDSDGRVDYEEFKAMMAAGN.

The disordered stretch occupies residues 1-33; that stretch reads MLRPPPPSSVLTASAAAARPPASVVQPQRQAAH. Residues 9 to 30 show a composition bias toward low complexity; it reads SVLTASAAAARPPASVVQPQRQ. EF-hand domains are found at residues 37 to 72, 126 to 161, and 164 to 197; these read AETL…LGAR, EKEA…MGLP, and ACMA…AAGN. Ca(2+) is bound by residues Asp50, Asp52, Asp54, Glu61, Asp139, Asp141, Asp143, Tyr145, Glu150, Asp177, Asp179, Asp181, Arg183, and Glu188.

Functionally, potential calcium sensor. The sequence is that of Probable calcium-binding protein CML21 (CML21) from Oryza sativa subsp. japonica (Rice).